A 109-amino-acid chain; its full sequence is Keratin, type II microfibrillar (109 aa).

A linker 1 region spans residues 1-10; sequence QNRQCCESNL. In terms of domain architecture, IF rod spans 1 to 109; the sequence is QNRQCCESNL…RLYEEEIRVL (109 aa). The tract at residues 11 to 109 is coil 1B; the sequence is EPLFSGYIET…RLYEEEIRVL (99 aa).

This sequence belongs to the intermediate filament family.

Wool microfibrillar keratin. This Ovis aries (Sheep) protein is Keratin, type II microfibrillar.